Reading from the N-terminus, the 427-residue chain is Phosphoribosylamine--glycine ligase (427 aa).

Residues 110–315 (KDFCQRHGLP…IVPILLAAAK (206 aa)) enclose the ATP-grasp domain. ATP is bound at residue 136-196 (LDTLEAPFVI…EEFMHGEEAS (61 aa)). Positions 285 and 287 each coordinate Mg(2+).

The protein belongs to the GARS family. The cofactor is Mg(2+). It depends on Mn(2+) as a cofactor.

The catalysed reaction is 5-phospho-beta-D-ribosylamine + glycine + ATP = N(1)-(5-phospho-beta-D-ribosyl)glycinamide + ADP + phosphate + H(+). The protein operates within purine metabolism; IMP biosynthesis via de novo pathway; N(1)-(5-phospho-D-ribosyl)glycinamide from 5-phospho-alpha-D-ribose 1-diphosphate: step 2/2. The polypeptide is Phosphoribosylamine--glycine ligase (Caulobacter vibrioides (strain ATCC 19089 / CIP 103742 / CB 15) (Caulobacter crescentus)).